A 568-amino-acid polypeptide reads, in one-letter code: Potassium-transporting ATPase potassium-binding subunit (568 aa).

The next 10 membrane-spanning stretches (helical) occupy residues 3 to 23, 68 to 88, 133 to 153, 180 to 200, 256 to 276, 281 to 301, 375 to 395, 421 to 441, 497 to 517, and 535 to 555; these read TEVL…YPLG, LLVV…TQGV, FVIM…MAGI, LLPL…PMGF, VECW…GFYL, LGYS…CINV, FGGV…AVFI, IVAL…AYLF, IVLI…AGIL, and VTFG…SFFP.

It belongs to the KdpA family. The system is composed of three essential subunits: KdpA, KdpB and KdpC.

It localises to the cell inner membrane. Functionally, part of the high-affinity ATP-driven potassium transport (or Kdp) system, which catalyzes the hydrolysis of ATP coupled with the electrogenic transport of potassium into the cytoplasm. This subunit binds the periplasmic potassium ions and delivers the ions to the membrane domain of KdpB through an intramembrane tunnel. The chain is Potassium-transporting ATPase potassium-binding subunit from Phocaeicola vulgatus (strain ATCC 8482 / DSM 1447 / JCM 5826 / CCUG 4940 / NBRC 14291 / NCTC 11154) (Bacteroides vulgatus).